A 192-amino-acid polypeptide reads, in one-letter code: Fe/S biogenesis protein NfuA (192 aa).

2 residues coordinate [4Fe-4S] cluster: Cys-149 and Cys-152.

It belongs to the NfuA family. As to quaternary structure, homodimer. [4Fe-4S] cluster is required as a cofactor.

Functionally, involved in iron-sulfur cluster biogenesis. Binds a 4Fe-4S cluster, can transfer this cluster to apoproteins, and thereby intervenes in the maturation of Fe/S proteins. Could also act as a scaffold/chaperone for damaged Fe/S proteins. This Aeromonas salmonicida (strain A449) protein is Fe/S biogenesis protein NfuA.